A 156-amino-acid chain; its full sequence is Probable succinate transporter subunit YjjB (156 aa).

Transmembrane regions (helical) follow at residues 7-27 (WALLQDMVLAAIPALGFAMVF), 54-74 (FGMDIEPASLLASIMIGMIGI), 86-106 (VFTVAAVIPMFPGISAYTAMI), and 128-148 (FLKASFIVGSLSIGLSLPGLW).

Belongs to the ThrE exporter (TC 2.A.79) family. As to quaternary structure, the transporter is composed of YjjB and YjjP.

Its subcellular location is the cell inner membrane. In terms of biological role, involved in succinate export with YjjP. Both proteins are required for export. This chain is Probable succinate transporter subunit YjjB, found in Yersinia enterocolitica serotype O:8 / biotype 1B (strain NCTC 13174 / 8081).